The sequence spans 668 residues: Probable 6-phosphofructo-2-kinase PB17E12.14c (668 aa).

Residues 1–14 are compositionally biased toward basic and acidic residues; that stretch reads MSNNNNKDDSELQS. 2 disordered regions span residues 1–105 and 136–185; these read MSNN…GSRP and HRVP…EATN. Composition is skewed to polar residues over residues 46–56, 65–86, and 164–184; these read NDHSFTNTDSV, SPVSTLTSNSANFSDSSLQNSP, and SSMSIPGQTSIVSSNNGSEAT. 197 to 204 contributes to the ATP binding site; sequence GLPARGKS. Catalysis depends on residues Asp-281 and Cys-312. Arg-346 serves as a coordination point for beta-D-fructose 6-phosphate. Residue Glu-540 is part of the active site. His-608 acts as the Proton donor in catalysis.

It carries out the reaction beta-D-fructose 6-phosphate + ATP = beta-D-fructose 2,6-bisphosphate + ADP + H(+). Functionally, synthesis of fructose 2,6-bisphosphate. This chain is Probable 6-phosphofructo-2-kinase PB17E12.14c, found in Schizosaccharomyces pombe (strain 972 / ATCC 24843) (Fission yeast).